The following is a 212-amino-acid chain: UPF0111 protein PH1389 (212 aa).

Belongs to the UPF0111 family.

The sequence is that of UPF0111 protein PH1389 from Pyrococcus horikoshii (strain ATCC 700860 / DSM 12428 / JCM 9974 / NBRC 100139 / OT-3).